A 61-amino-acid polypeptide reads, in one-letter code: Small ribosomal subunit protein uS14B (61 aa).

Residues C24, C27, C40, and C43 each contribute to the Zn(2+) site.

Belongs to the universal ribosomal protein uS14 family. Zinc-binding uS14 subfamily. As to quaternary structure, part of the 30S ribosomal subunit. Contacts proteins S3 and S10. It depends on Zn(2+) as a cofactor.

Binds 16S rRNA, required for the assembly of 30S particles and may also be responsible for determining the conformation of the 16S rRNA at the A site. The polypeptide is Small ribosomal subunit protein uS14B (Staphylococcus epidermidis (strain ATCC 35984 / DSM 28319 / BCRC 17069 / CCUG 31568 / BM 3577 / RP62A)).